We begin with the raw amino-acid sequence, 315 residues long: Cobalamin biosynthesis protein CobD (315 aa).

Transmembrane regions (helical) follow at residues 54–74 (GLLF…ILFL), 78–98 (IAYW…LAMT), 152–172 (ADGV…LALM), 203–223 (IANF…SFIL), and 295–315 (LLYM…LLLF).

It belongs to the CobD/CbiB family.

The protein localises to the cell membrane. It participates in cofactor biosynthesis; adenosylcobalamin biosynthesis. In terms of biological role, converts cobyric acid to cobinamide by the addition of aminopropanol on the F carboxylic group. The protein is Cobalamin biosynthesis protein CobD of Listeria monocytogenes serovar 1/2a (strain ATCC BAA-679 / EGD-e).